The chain runs to 264 residues: Proteasome subunit beta type-5 (264 aa).

Residues 1–59 (MALASVLQRPMPVNQHGFFGLGGGADLLDLGPGSPGDGLSLAAPSWGVPEEPRIEMLHG) constitute a propeptide, removed in mature form. The active-site Nucleophile is the T60. Position 108 (A108) interacts with bortezomib.

Belongs to the peptidase T1B family. In terms of assembly, the 26S proteasome consists of a 20S proteasome core and two 19S regulatory subunits. The 20S proteasome core is a barrel-shaped complex made of 28 subunits that are arranged in four stacked rings. The two outer rings are each formed by seven alpha subunits, and the two inner rings are formed by seven beta subunits. The proteolytic activity is exerted by three beta-subunits PSMB5, PSMB6 and PSMB7. Directly interacts with POMP. Interacts with ABCB1 and TAP1. Expressed in uterus at the embryo implantation site.

It is found in the cytoplasm. Its subcellular location is the nucleus. The enzyme catalyses Cleavage of peptide bonds with very broad specificity.. Component of the 20S core proteasome complex involved in the proteolytic degradation of most intracellular proteins. This complex plays numerous essential roles within the cell by associating with different regulatory particles. Associated with two 19S regulatory particles, forms the 26S proteasome and thus participates in the ATP-dependent degradation of ubiquitinated proteins. The 26S proteasome plays a key role in the maintenance of protein homeostasis by removing misfolded or damaged proteins that could impair cellular functions, and by removing proteins whose functions are no longer required. Associated with the PA200 or PA28, the 20S proteasome mediates ubiquitin-independent protein degradation. This type of proteolysis is required in several pathways including spermatogenesis (20S-PA200 complex) or generation of a subset of MHC class I-presented antigenic peptides (20S-PA28 complex). Within the 20S core complex, PSMB5 displays a chymotrypsin-like activity. This chain is Proteasome subunit beta type-5 (Psmb5), found in Mus musculus (Mouse).